The primary structure comprises 1314 residues: Synergin gamma (1314 aa).

A coiled-coil region spans residues 115-155; it reads MQKQFAEEQQKRFEQQQKLLEEERKRRQFEEQKQKLRLLSS. The segment at 178–199 is disordered; sequence GFSRDAKMHPTPASHPKKPGPS. The 94-residue stretch at 295–388 folds into the EH domain; the sequence is NESLVPDAYK…QFPAAPIPTL (94 aa). The DFXDF motif 1 signature appears at 457 to 461; that stretch reads DFQDF. The disordered stretch occupies residues 460–498; it reads DFQDASKSGSLDDSFSDFQELPASSKTSNSQHGNSAPSL. Polar residues predominate over residues 462–496; that stretch reads QDASKSGSLDDSFSDFQELPASSKTSNSQHGNSAP. S473 is subject to Phosphoserine. K513 is modified (N6-acetyllysine). The interaction with AP1G1 stretch occupies residues 518–786; sequence KGIAADKSSE…ADFHSSKFSS (269 aa). S580 carries the post-translational modification Phosphoserine. Residues 666-678 form an interaction with AP1G1, AP1G2 and GGA1 region; that stretch reads LADDFGEFSLFGE. Residues 690–694 carry the DFXDF motif 2 motif; the sequence is DFADF. Residue S720 is modified to Phosphoserine. The residue at position 744 (K744) is an N6-acetyllysine. Phosphoserine occurs at positions 752 and 772. The DFXDF motif 3 signature appears at 775-779; sequence DFADF. Phosphoserine occurs at positions 812, 852, 855, 909, 919, and 935. Disordered regions lie at residues 972-1026 and 1073-1102; these read PQTS…DFGE and SLSL…NTLN. Over residues 976 to 990 the composition is skewed to basic and acidic residues; the sequence is EQKEYENRDYKDFTK. The segment covering 1001 to 1019 has biased composition (polar residues); sequence EATCPSPASSGASQETPNE. S1006, S1073, S1075, S1087, and S1098 each carry phosphoserine. T1100 is modified (phosphothreonine).

As to quaternary structure, self-associates. Interacts with GGA1 (via GAE domain). Interacts with GGA2 and GGA3. Interacts with AP1G1 (via GAE domain), a subunit of adapter protein complex AP-1. Interacts with AP1G2 (via GAE domain) a subunit of adapter protein complex AP-1. Component of the aftiphilin/p200/gamma-synergin complex, at least composed of AFTPH/aftiphilin, HEATR5B/p200a and SYNRG/gamma-synergin, which plays a role in the AP1G1/AP-1-mediated trafficking of transferrin from early to recycling endosomes. Within the complex interacts with AFTPH/aftiphilin and HEATR5B/p200a; the interactions are direct. Interacts (via EH domain) with SCAMP1.

Its subcellular location is the cytoplasm. It localises to the golgi apparatus. The protein resides in the trans-Golgi network membrane. The protein localises to the perinuclear region. It is found in the cytoplasmic vesicle. Its subcellular location is the clathrin-coated vesicle. In terms of biological role, plays a role in endocytosis and/or membrane trafficking at the trans-Golgi network (TGN). May act by linking the adapter protein complex AP-1 to other proteins. Component of clathrin-coated vesicles. Component of the aftiphilin/p200/gamma-synergin complex, which plays roles in AP1G1/AP-1-mediated protein trafficking including the trafficking of transferrin from early to recycling endosomes, and the membrane trafficking of furin and the lysosomal enzyme cathepsin D between the trans-Golgi network (TGN) and endosomes. The chain is Synergin gamma from Homo sapiens (Human).